Here is a 61-residue protein sequence, read N- to C-terminus: MLEGLFKNKKQEEADEGDQVLILDILDEERTMLPPGFEIVSTTQDGKIIAKDREGHLWVIK.

This is an uncharacterized protein from Acidianus convivator (ATV).